The sequence spans 348 residues: Flagellar P-ring protein (348 aa).

An N-terminal signal peptide occupies residues 1–24 (MRRKNNNKIWIWVATLILSISALY).

This sequence belongs to the FlgI family. As to quaternary structure, the basal body constitutes a major portion of the flagellar organelle and consists of four rings (L,P,S, and M) mounted on a central rod.

Its subcellular location is the periplasm. It localises to the bacterial flagellum basal body. In terms of biological role, assembles around the rod to form the L-ring and probably protects the motor/basal body from shearing forces during rotation. The chain is Flagellar P-ring protein from Helicobacter hepaticus (strain ATCC 51449 / 3B1).